A 94-amino-acid polypeptide reads, in one-letter code: Aspartyl/glutamyl-tRNA(Asn/Gln) amidotransferase subunit C (94 aa).

Belongs to the GatC family. Heterotrimer of A, B and C subunits.

The enzyme catalyses L-glutamyl-tRNA(Gln) + L-glutamine + ATP + H2O = L-glutaminyl-tRNA(Gln) + L-glutamate + ADP + phosphate + H(+). It carries out the reaction L-aspartyl-tRNA(Asn) + L-glutamine + ATP + H2O = L-asparaginyl-tRNA(Asn) + L-glutamate + ADP + phosphate + 2 H(+). Allows the formation of correctly charged Asn-tRNA(Asn) or Gln-tRNA(Gln) through the transamidation of misacylated Asp-tRNA(Asn) or Glu-tRNA(Gln) in organisms which lack either or both of asparaginyl-tRNA or glutaminyl-tRNA synthetases. The reaction takes place in the presence of glutamine and ATP through an activated phospho-Asp-tRNA(Asn) or phospho-Glu-tRNA(Gln). This Nitratidesulfovibrio vulgaris (strain ATCC 29579 / DSM 644 / CCUG 34227 / NCIMB 8303 / VKM B-1760 / Hildenborough) (Desulfovibrio vulgaris) protein is Aspartyl/glutamyl-tRNA(Asn/Gln) amidotransferase subunit C.